Reading from the N-terminus, the 267-residue chain is 4-hydroxy-tetrahydrodipicolinate reductase (267 aa).

NAD(+)-binding positions include 8–13 (GAAGRM) and Asp34. Residue Arg35 participates in NADP(+) binding. Residues 98 to 100 (GTT) and 122 to 125 (AANF) each bind NAD(+). Residue His155 is the Proton donor/acceptor of the active site. His156 contacts (S)-2,3,4,5-tetrahydrodipicolinate. Lys159 serves as the catalytic Proton donor. Residue 165–166 (GT) participates in (S)-2,3,4,5-tetrahydrodipicolinate binding.

Belongs to the DapB family.

The protein localises to the cytoplasm. The enzyme catalyses (S)-2,3,4,5-tetrahydrodipicolinate + NAD(+) + H2O = (2S,4S)-4-hydroxy-2,3,4,5-tetrahydrodipicolinate + NADH + H(+). The catalysed reaction is (S)-2,3,4,5-tetrahydrodipicolinate + NADP(+) + H2O = (2S,4S)-4-hydroxy-2,3,4,5-tetrahydrodipicolinate + NADPH + H(+). The protein operates within amino-acid biosynthesis; L-lysine biosynthesis via DAP pathway; (S)-tetrahydrodipicolinate from L-aspartate: step 4/4. In terms of biological role, catalyzes the conversion of 4-hydroxy-tetrahydrodipicolinate (HTPA) to tetrahydrodipicolinate. The sequence is that of 4-hydroxy-tetrahydrodipicolinate reductase from Pseudomonas putida (strain GB-1).